A 600-amino-acid chain; its full sequence is Elongation factor 4 (600 aa).

In terms of domain architecture, tr-type G spans 4-186 (SKIRNFSIIA…AIVDKIPPPS (183 aa)). GTP is bound by residues 16-21 (DHGKST) and 133-136 (NKID).

It belongs to the TRAFAC class translation factor GTPase superfamily. Classic translation factor GTPase family. LepA subfamily.

Its subcellular location is the cell membrane. It catalyses the reaction GTP + H2O = GDP + phosphate + H(+). In terms of biological role, required for accurate and efficient protein synthesis under certain stress conditions. May act as a fidelity factor of the translation reaction, by catalyzing a one-codon backward translocation of tRNAs on improperly translocated ribosomes. Back-translocation proceeds from a post-translocation (POST) complex to a pre-translocation (PRE) complex, thus giving elongation factor G a second chance to translocate the tRNAs correctly. Binds to ribosomes in a GTP-dependent manner. The protein is Elongation factor 4 of Mycoplasma capricolum subsp. capricolum (strain California kid / ATCC 27343 / NCTC 10154).